We begin with the raw amino-acid sequence, 228 residues long: Derlin-3 (228 aa).

The Cytoplasmic segment spans residues 1 to 22 (MAGQRLAAGFLQVPAVTRAYTA). The chain crosses the membrane as a helical span at residues 23–43 (ACVLTTAAVQLELLSPFQLYF). The Lumenal segment spans residues 44–57 (NPHLVFRKFQVWRL). The chain crosses the membrane as a helical span at residues 58-78 (ITTFLFFGPLGFGFFFNMLFV). Residues 79–98 (FRYCRMLEEGSFRGRKADFV) lie on the Cytoplasmic side of the membrane. The chain crosses the membrane as a helical span at residues 99 to 119 (FMFLFGGVLMTLLGFLGSLFF). Residues 120–168 (LGQALMAMLVYVWSRRSPHVRVNFFGLLNFQAPFLPWALMGFSLLLGNS) are Lumenal-facing. The chain crosses the membrane as a helical span at residues 169-189 (VVTDLLGILVGHIYYFLEDVF). The Cytoplasmic portion of the chain corresponds to 190–228 (PNQPGGKRLLLTPSVLKLLLDDPQEDPDYLPLPEEQPEL).

It belongs to the derlin family. In terms of assembly, forms homo- and heterooligomers with DERL2 and, to a lesser extent, with DERL1. Interacts with VCP and EDEM1. Interacts with SELENOK and SELENOS. Interacts with the signal recognition particle/SRP and the SRP receptor; in the process of endoplasmic reticulum stress-induced pre-emptive quality control. Highly expressed in spleen, lung, liver, spleen and testis. Expressed at intermediate level in kidney. Weakly or not expressed in brain, heart and skeletal muscle.

The protein localises to the endoplasmic reticulum membrane. Functional component of endoplasmic reticulum-associated degradation (ERAD) for misfolded lumenal glycoproteins, but not that of misfolded nonglycoproteins. May act by forming a channel that allows the retrotranslocation of misfolded glycoproteins into the cytosol where they are ubiquitinated and degraded by the proteasome. May mediate the interaction between VCP and the misfolded glycoproteins. May be involved in endoplasmic reticulum stress-induced pre-emptive quality control, a mechanism that selectively attenuates the translocation of newly synthesized proteins into the endoplasmic reticulum and reroutes them to the cytosol for proteasomal degradation. The protein is Derlin-3 of Mus musculus (Mouse).